The primary structure comprises 327 residues: Acetaldehyde dehydrogenase 6 (327 aa).

15–18 (SGNI) contributes to the NAD(+) binding site. Catalysis depends on Cys133, which acts as the Acyl-thioester intermediate. Residues 164 to 172 (SAGPGTRAN) and Asn297 each bind NAD(+).

It belongs to the acetaldehyde dehydrogenase family.

The enzyme catalyses acetaldehyde + NAD(+) + CoA = acetyl-CoA + NADH + H(+). This chain is Acetaldehyde dehydrogenase 6, found in Rhodococcus opacus (strain B4).